Here is a 296-residue protein sequence, read N- to C-terminus: tRNA (guanine(9)-N1)-methyltransferase (296 aa).

The disordered stretch occupies residues 1 to 33; sequence MTPETNNDETLSRPKPRAALPPVPEGMSKSQWK. The region spanning 85 to 274 is the SAM-dependent MTase TRM10-type domain; the sequence is TPRVNVNQKD…SVLPARKLAE (190 aa). Residues 181–182, G201, 205–209, C213, L227, and 239–241 each bind S-adenosyl-L-methionine; these read LT, DKNRH, and KVL. The Proton acceptor role is filled by D205. The disordered stretch occupies residues 277-296; it reads DHAQESNSSSPAEEQDAQDI.

Belongs to the class IV-like SAM-binding methyltransferase superfamily. TRM10 family. In terms of assembly, monomer.

The protein resides in the cytoplasm. It is found in the nucleus. It catalyses the reaction guanosine(9) in tRNA + S-adenosyl-L-methionine = N(1)-methylguanosine(9) in tRNA + S-adenosyl-L-homocysteine + H(+). S-adenosyl-L-methionine-dependent guanine N(1)-methyltransferase that catalyzes the formation of N(1)-methylguanine at position 9 (m1G9) in cytoplasmic tRNA. This is tRNA (guanine(9)-N1)-methyltransferase from Eremothecium gossypii (strain ATCC 10895 / CBS 109.51 / FGSC 9923 / NRRL Y-1056) (Yeast).